Here is a 349-residue protein sequence, read N- to C-terminus: MSKIDSVLIIGGSGFLGLHLIQQFFDINPKPDIHIFDVRDLPEKLSKQFTFNVDDIKFHKGDLTSPDDMENAINESKANVVVHCASPMHGQNPDIYDIVNVKGTRNVIDMCKKCGVNILVYTSSAGVIFNGQDVHNADETWPIPEVPMDAYNETKAIAEDMVLKANDPSSDFYTVALRPAGIFGPGDRQLVPGLRQVAKLGQSKFQIGDNNNLFDWTYAGNVADAHVLAAQKLLDPKTRTAVSGETFFITNDTPTYFWALARTVWKADGHIDKHVIVLKRPVAICAGYLSEWVSKMLGKEPGLTPFRVKIVCAYRYHNIAKAKKLLGYTPRVGIEEGINKTLAWMDEGL.

Residues 11–17 (GGSGFLG), 62–63 (DL), and 84–86 (CAS) contribute to the NADP(+) site. The substrate site is built by serine 124 and tyrosine 151. NADP(+) contacts are provided by residues tyrosine 151, lysine 155, and 179–182 (PAGI). Lysine 155 acts as the Proton donor in catalysis.

The protein belongs to the 3-beta-HSD family. Heterotetramer of ERG25, ERG26, ERG27 and ERG28. ERG28 acts as a scaffold to tether ERG27 and other 4,4-demethylation-related enzymes, forming a demethylation enzyme complex, in the endoplasmic reticulum.

The protein resides in the endoplasmic reticulum membrane. It carries out the reaction 4beta-methylzymosterol-4alpha-carboxylate + NADP(+) = 3-dehydro-4-methylzymosterol + CO2 + NADPH. The protein operates within steroid biosynthesis; zymosterol biosynthesis; zymosterol from lanosterol: step 4/6. Its activity is regulated as follows. Inhibited by FR171456, a natural product with broad antifungal activity. Its function is as follows. Sterol-4-alpha-carboxylate 3-dehydrogenase; part of the third module of ergosterol biosynthesis pathway that includes the late steps of the pathway. ERG26 is a catalytic component of the C-4 demethylation complex that catalyzes the oxidative decarboxylation that results in a reduction of the 3-beta-hydroxy group at the C-3 carbon to an oxo group. The third module or late pathway involves the ergosterol synthesis itself through consecutive reactions that mainly occur in the endoplasmic reticulum (ER) membrane. Firstly, the squalene synthase ERG9 catalyzes the condensation of 2 farnesyl pyrophosphate moieties to form squalene, which is the precursor of all steroids. Squalene synthase is crucial for balancing the incorporation of farnesyl diphosphate (FPP) into sterol and nonsterol isoprene synthesis. Secondly, the squalene epoxidase ERG1 catalyzes the stereospecific oxidation of squalene to (S)-2,3-epoxysqualene, which is considered to be a rate-limiting enzyme in steroid biosynthesis. Then, the lanosterol synthase ERG7 catalyzes the cyclization of (S)-2,3 oxidosqualene to lanosterol, a reaction that forms the sterol core. In the next steps, lanosterol is transformed to zymosterol through a complex process involving various demethylation, reduction and desaturation reactions. The lanosterol 14-alpha-demethylase ERG11 (also known as CYP51) catalyzes C14-demethylation of lanosterol to produce 4,4'-dimethyl cholesta-8,14,24-triene-3-beta-ol, which is critical for ergosterol biosynthesis. The C-14 reductase ERG24 reduces the C14=C15 double bond of 4,4-dimethyl-cholesta-8,14,24-trienol to produce 4,4-dimethyl-cholesta-8,24-dienol. 4,4-dimethyl-cholesta-8,24-dienol is substrate of the C-4 demethylation complex ERG25-ERG26-ERG27 in which ERG25 catalyzes the three-step monooxygenation required for the demethylation of 4,4-dimethyl and 4alpha-methylsterols, ERG26 catalyzes the oxidative decarboxylation that results in a reduction of the 3-beta-hydroxy group at the C-3 carbon to an oxo group, and ERG27 is responsible for the reduction of the keto group on the C-3. ERG28 has a role as a scaffold to help anchor ERG25, ERG26 and ERG27 to the endoplasmic reticulum and ERG29 regulates the activity of the iron-containing C4-methylsterol oxidase ERG25. Then, the sterol 24-C-methyltransferase ERG6 catalyzes the methyl transfer from S-adenosyl-methionine to the C-24 of zymosterol to form fecosterol. The C-8 sterol isomerase ERG2 catalyzes the reaction which results in unsaturation at C-7 in the B ring of sterols and thus converts fecosterol to episterol. The sterol-C5-desaturase ERG3 then catalyzes the introduction of a C-5 double bond in the B ring to produce 5-dehydroepisterol. The C-22 sterol desaturase ERG5 further converts 5-dehydroepisterol into ergosta-5,7,22,24(28)-tetraen-3beta-ol by forming the C-22(23) double bond in the sterol side chain. Finally, ergosta-5,7,22,24(28)-tetraen-3beta-ol is substrate of the C-24(28) sterol reductase ERG4 to produce ergosterol. The protein is Sterol-4-alpha-carboxylate 3-dehydrogenase ERG26, decarboxylating of Saccharomyces cerevisiae (strain ATCC 204508 / S288c) (Baker's yeast).